Here is a 299-residue protein sequence, read N- to C-terminus: GTP cyclohydrolase FolE2 (299 aa).

Belongs to the GTP cyclohydrolase IV family.

It catalyses the reaction GTP + H2O = 7,8-dihydroneopterin 3'-triphosphate + formate + H(+). The protein operates within cofactor biosynthesis; 7,8-dihydroneopterin triphosphate biosynthesis; 7,8-dihydroneopterin triphosphate from GTP: step 1/1. In terms of biological role, converts GTP to 7,8-dihydroneopterin triphosphate. The protein is GTP cyclohydrolase FolE2 of Citrobacter koseri (strain ATCC BAA-895 / CDC 4225-83 / SGSC4696).